A 740-amino-acid chain; its full sequence is Protein SIEVE ELEMENT OCCLUSION B (740 aa).

Positions 1–23 (MESLIKSQHAQQLAGHKNTTGKT) are enriched in polar residues. The interval 1 to 27 (MESLIKSQHAQQLAGHKNTTGKTPSME) is disordered.

As to quaternary structure, can form homodimer. In terms of tissue distribution, expressed in phloem sieve elements.

Scaffold protein required to form the phloem filament matrix in sieve elements. The protein is Protein SIEVE ELEMENT OCCLUSION B of Arabidopsis thaliana (Mouse-ear cress).